Reading from the N-terminus, the 300-residue chain is 4-hydroxy-tetrahydrodipicolinate synthase (300 aa).

T46 lines the pyruvate pocket. The active-site Proton donor/acceptor is Y134. Catalysis depends on K162, which acts as the Schiff-base intermediate with substrate. I207 provides a ligand contact to pyruvate.

It belongs to the DapA family. As to quaternary structure, homotetramer; dimer of dimers.

It localises to the cytoplasm. The enzyme catalyses L-aspartate 4-semialdehyde + pyruvate = (2S,4S)-4-hydroxy-2,3,4,5-tetrahydrodipicolinate + H2O + H(+). It participates in amino-acid biosynthesis; L-lysine biosynthesis via DAP pathway; (S)-tetrahydrodipicolinate from L-aspartate: step 3/4. In terms of biological role, catalyzes the condensation of (S)-aspartate-beta-semialdehyde [(S)-ASA] and pyruvate to 4-hydroxy-tetrahydrodipicolinate (HTPA). This is 4-hydroxy-tetrahydrodipicolinate synthase from Protochlamydia amoebophila (strain UWE25).